Reading from the N-terminus, the 237-residue chain is Class B acid phosphatase (237 aa).

The first 25 residues, 1–25, serve as a signal peptide directing secretion; it reads MRKITLALSAACLLFSLNNAVVARA. Catalysis depends on Asp-69, which acts as the Nucleophile. Residues Asp-69 and Asp-71 each coordinate Mg(2+). Asp-71 acts as the Proton donor in catalysis. Substrate-binding positions include 137-138 and Lys-177; that span reads TG. Asp-192 contacts Mg(2+).

The protein belongs to the class B bacterial acid phosphatase family. Homotetramer. It depends on Mg(2+) as a cofactor.

Its subcellular location is the periplasm. It catalyses the reaction a phosphate monoester + H2O = an alcohol + phosphate. Functionally, dephosphorylates several organic phosphate monoesters. Also has a phosphotransferase activity catalyzing the transfer of low-energy phosphate groups from organic phosphate monoesters to free hydroxyl groups of various organic compounds. In Enterobacter sp. (strain 638), this protein is Class B acid phosphatase.